The following is a 199-amino-acid chain: MTGFKQHKGIVVPLDSANVDTDAIIPKQFLQKVNRIGFGKHLFHDWRFLDDAGQQPNPEFVLNQPQFAGASILLARENFGCGSSREHAPWALADYGFKTIIAPSFADIFYGNAINNGMVPVRLKEEEVDALFQLVAAQPGIEIEVDLEANQVRADSLCFGFEIDEFRRYCLLNGLDAIGLTLQHEAAISAFEAKQPSWI.

It belongs to the LeuD family. LeuD type 1 subfamily. Heterodimer of LeuC and LeuD.

The catalysed reaction is (2R,3S)-3-isopropylmalate = (2S)-2-isopropylmalate. Its pathway is amino-acid biosynthesis; L-leucine biosynthesis; L-leucine from 3-methyl-2-oxobutanoate: step 2/4. Catalyzes the isomerization between 2-isopropylmalate and 3-isopropylmalate, via the formation of 2-isopropylmaleate. The sequence is that of 3-isopropylmalate dehydratase small subunit from Aeromonas hydrophila subsp. hydrophila (strain ATCC 7966 / DSM 30187 / BCRC 13018 / CCUG 14551 / JCM 1027 / KCTC 2358 / NCIMB 9240 / NCTC 8049).